A 342-amino-acid chain; its full sequence is Fructose-1,6-bisphosphatase class 1 (342 aa).

Glutamate 97, aspartate 119, leucine 121, and aspartate 122 together coordinate Mg(2+). Residues 122–125, asparagine 215, tyrosine 247, and lysine 280 each bind substrate; that span reads DGSS. Glutamate 286 is a Mg(2+) binding site.

This sequence belongs to the FBPase class 1 family. Homotetramer. Mg(2+) serves as cofactor.

The protein localises to the cytoplasm. The enzyme catalyses beta-D-fructose 1,6-bisphosphate + H2O = beta-D-fructose 6-phosphate + phosphate. It participates in carbohydrate biosynthesis; gluconeogenesis. The protein is Fructose-1,6-bisphosphatase class 1 of Leptospira borgpetersenii serovar Hardjo-bovis (strain JB197).